The following is an 89-amino-acid chain: Small ribosomal subunit protein uS15 (89 aa).

This sequence belongs to the universal ribosomal protein uS15 family. Part of the 30S ribosomal subunit. Forms a bridge to the 50S subunit in the 70S ribosome, contacting the 23S rRNA.

In terms of biological role, one of the primary rRNA binding proteins, it binds directly to 16S rRNA where it helps nucleate assembly of the platform of the 30S subunit by binding and bridging several RNA helices of the 16S rRNA. Forms an intersubunit bridge (bridge B4) with the 23S rRNA of the 50S subunit in the ribosome. The chain is Small ribosomal subunit protein uS15 from Chlorobium phaeobacteroides (strain DSM 266 / SMG 266 / 2430).